Consider the following 483-residue polypeptide: Regulatory protein ViaA (483 aa).

Belongs to the ViaA family. In terms of assembly, homodimer. Interacts with RavA.

It is found in the cytoplasm. Its function is as follows. Component of the RavA-ViaA chaperone complex, which may act on the membrane to optimize the function of some of the respiratory chains. ViaA stimulates the ATPase activity of RavA. The sequence is that of Regulatory protein ViaA from Escherichia coli O6:K15:H31 (strain 536 / UPEC).